A 506-amino-acid chain; its full sequence is Glutamate--tRNA ligase (506 aa).

The 'HIGH' region signature appears at 12–22 (PSPTGDPHVGT). Residues 253 to 257 (KLSKR) carry the 'KMSKS' region motif. Residue K256 coordinates ATP.

This sequence belongs to the class-I aminoacyl-tRNA synthetase family. Glutamate--tRNA ligase type 1 subfamily. Monomer.

It is found in the cytoplasm. It catalyses the reaction tRNA(Glu) + L-glutamate + ATP = L-glutamyl-tRNA(Glu) + AMP + diphosphate. Catalyzes the attachment of glutamate to tRNA(Glu) in a two-step reaction: glutamate is first activated by ATP to form Glu-AMP and then transferred to the acceptor end of tRNA(Glu). This Chlamydia muridarum (strain MoPn / Nigg) protein is Glutamate--tRNA ligase.